Consider the following 144-residue polypeptide: Transcriptional regulator SlyA (144 aa).

Positions 2 to 135 (ESTLGSDLAR…LVGLIGKLEQ (134 aa)) constitute an HTH marR-type domain. The segment at residues 49–72 (QIQLAKAIGIEQPSLVRTLDQLEE) is a DNA-binding region (H-T-H motif).

The protein belongs to the SlyA family. Homodimer.

In terms of biological role, transcription regulator that can specifically activate or repress expression of target genes. The chain is Transcriptional regulator SlyA from Serratia proteamaculans (strain 568).